Here is a 239-residue protein sequence, read N- to C-terminus: UDP-2,3-diacylglucosamine hydrolase (239 aa).

Mn(2+) contacts are provided by aspartate 8, histidine 10, aspartate 41, asparagine 79, and histidine 114. 79–80 (NR) lines the substrate pocket. Residues aspartate 122, serine 160, asparagine 164, lysine 167, and histidine 195 each contribute to the substrate site. 2 residues coordinate Mn(2+): histidine 195 and histidine 197.

The protein belongs to the LpxH family. Mn(2+) serves as cofactor.

It is found in the cell inner membrane. The catalysed reaction is UDP-2-N,3-O-bis[(3R)-3-hydroxytetradecanoyl]-alpha-D-glucosamine + H2O = 2-N,3-O-bis[(3R)-3-hydroxytetradecanoyl]-alpha-D-glucosaminyl 1-phosphate + UMP + 2 H(+). It participates in glycolipid biosynthesis; lipid IV(A) biosynthesis; lipid IV(A) from (3R)-3-hydroxytetradecanoyl-[acyl-carrier-protein] and UDP-N-acetyl-alpha-D-glucosamine: step 4/6. In terms of biological role, hydrolyzes the pyrophosphate bond of UDP-2,3-diacylglucosamine to yield 2,3-diacylglucosamine 1-phosphate (lipid X) and UMP by catalyzing the attack of water at the alpha-P atom. Involved in the biosynthesis of lipid A, a phosphorylated glycolipid that anchors the lipopolysaccharide to the outer membrane of the cell. The chain is UDP-2,3-diacylglucosamine hydrolase from Sodalis glossinidius (strain morsitans).